The chain runs to 654 residues: Beta-mannosyltransferase 2 (654 aa).

Topologically, residues 1–37 are cytoplasmic; it reads MLAWLRHRIRSYNTSTYSSILPSASFGKVYKIGTKLN. Residues 38 to 58 form a helical membrane-spanning segment; that stretch reads FTLLALCLLLACSVFFNYFYL. At 59–654 the chain is on the extracellular side; sequence ADNNGLDIDT…ANGNGKGSSS (596 aa).

It belongs to the BMT family.

It localises to the membrane. In terms of biological role, beta-mannosyltransferase involved in cell wall biosynthesis. Required for the addition of beta-mannose to the acid-labile fraction of cell wall phosphopeptidomannan. The protein is Beta-mannosyltransferase 2 (RHD1) of Candida albicans (strain SC5314 / ATCC MYA-2876) (Yeast).